A 124-amino-acid polypeptide reads, in one-letter code: Small ribosomal subunit protein uS12 (124 aa).

D89 carries the 3-methylthioaspartic acid modification.

Belongs to the universal ribosomal protein uS12 family. Part of the 30S ribosomal subunit. Contacts proteins S8 and S17. May interact with IF1 in the 30S initiation complex.

In terms of biological role, with S4 and S5 plays an important role in translational accuracy. Its function is as follows. Interacts with and stabilizes bases of the 16S rRNA that are involved in tRNA selection in the A site and with the mRNA backbone. Located at the interface of the 30S and 50S subunits, it traverses the body of the 30S subunit contacting proteins on the other side and probably holding the rRNA structure together. The combined cluster of proteins S8, S12 and S17 appears to hold together the shoulder and platform of the 30S subunit. The protein is Small ribosomal subunit protein uS12 of Aliivibrio salmonicida (strain LFI1238) (Vibrio salmonicida (strain LFI1238)).